The primary structure comprises 130 residues: Small ribosomal subunit protein uS8 (130 aa).

This sequence belongs to the universal ribosomal protein uS8 family. In terms of assembly, component of the small ribosomal subunit (SSU). Mature N.crassa ribosomes consist of a small (40S) and a large (60S) subunit. The 40S small subunit contains 1 molecule of ribosomal RNA (18S rRNA) and at least 32 different proteins. The large 60S subunit contains 3 rRNA molecules (26S, 5.8S and 5S rRNA) and at least 42 different proteins.

The protein resides in the cytoplasm. Component of the ribosome, a large ribonucleoprotein complex responsible for the synthesis of proteins in the cell. The small ribosomal subunit (SSU) binds messenger RNAs (mRNAs) and translates the encoded message by selecting cognate aminoacyl-transfer RNA (tRNA) molecules. The large subunit (LSU) contains the ribosomal catalytic site termed the peptidyl transferase center (PTC), which catalyzes the formation of peptide bonds, thereby polymerizing the amino acids delivered by tRNAs into a polypeptide chain. The nascent polypeptides leave the ribosome through a tunnel in the LSU and interact with protein factors that function in enzymatic processing, targeting, and the membrane insertion of nascent chains at the exit of the ribosomal tunnel. The protein is Small ribosomal subunit protein uS8 (crp-27) of Neurospora crassa (strain ATCC 24698 / 74-OR23-1A / CBS 708.71 / DSM 1257 / FGSC 987).